We begin with the raw amino-acid sequence, 92 residues long: Small ribosomal subunit protein uS19c (92 aa).

Belongs to the universal ribosomal protein uS19 family.

It localises to the plastid. The protein localises to the chloroplast. Protein S19 forms a complex with S13 that binds strongly to the 16S ribosomal RNA. The polypeptide is Small ribosomal subunit protein uS19c (Manihot esculenta (Cassava)).